A 1059-amino-acid chain; its full sequence is Potassium transporter TRK1 (1059 aa).

The Cytoplasmic segment spans residues 1–46 (MLYRVSGFYKRHTRNFTNIDYGYYIRNFIHHIASKIYPYAKVVLPN). A helical membrane pass occupies residues 47–67 (FRAAHYFYILTLVILGSILVY). Topologically, residues 68–73 (PVKTCA) are extracellular. Residues 74–90 (YIDVLFFTAGASTQAGL) lie within the membrane without spanning it. The Extracellular portion of the chain corresponds to 91–99 (NTVNVNDLS). The chain crosses the membrane as a helical span at residues 100-122 (LYQQIVLYLLATLATPIFIHGSL). Residues 123–625 (LFVRLYYFER…LGGIEYRAVK (503 aa)) lie on the Cytoplasmic side of the membrane. Disordered stretches follow at residues 180–276 (REAE…IDPE), 304–350 (IGSP…EDED), and 404–574 (PWTS…SIEN). Low complexity predominate over residues 186-203 (SSSSPQSSSSQTSQPVST). Over residues 236–245 (EKIHFEEPQR) the composition is skewed to basic and acidic residues. Residues 335-344 (PATNSVGTGN) show a composition bias toward polar residues. Positions 412 to 423 (TLSNSSKKGSLS) are enriched in low complexity. 2 stretches are compositionally biased toward acidic residues: residues 428–449 (DTED…SDIS) and 469–490 (YEED…DDGE). Positions 524–536 (RSNTLDTPQQNTS) are enriched in polar residues. The segment covering 540 to 552 (KIRKKAPKRKTPR) has biased composition (basic residues). The span at 556 to 566 (NASFNQHSNVS) shows a compositional bias: polar residues. Residues 626–649 (LLIKIIVVYYVGFNIIPGVMLSIW) traverse the membrane as a helical segment. The Extracellular portion of the chain corresponds to 650-668 (IYCMPHYKNLMISSSISPA). Residues 669 to 685 (WWAFFTSQSSFNDLGLT) lie within the membrane without spanning it. The Extracellular segment spans residues 686 to 696 (LTSNSMMSFNQ). Residues 697–713 (NAFVQILCSFLIVIGNT) form a helical membrane-spanning segment. The Cytoplasmic segment spans residues 714-757 (GFPILLRFIIWVMFKTARPLSLYKESLGFLLDHPRRCFTLLFPS). The chain crosses the membrane as a helical span at residues 758 to 781 (VPTWWLFFILVVLNGFDLVIFCIL). Residues 782 to 796 (DLHDDTFKGVDMGYR) are Extracellular-facing. Residues 797-813 (VLNGLFQAFCTRTVGFS) lie within the membrane without spanning it. At 814–820 (VMDLSQL) the chain is on the extracellular side. The helical transmembrane segment at 821-844 (HAATQVSYLIMMYISVLPIAISVR) threads the bilayer. Residues 845–877 (RTNVYEEQSLGVYAKENAEGVDESAPSNYVGSH) are Cytoplasmic-facing. A helical membrane pass occupies residues 878 to 899 (LRNQLSYDLWYICLGLFIICIA). Topologically, residues 900–912 (EGKRLKEQDLRFS) are extracellular. Residues 913 to 931 (IFAVLFEIVSAYGTVGMSM) lie within the membrane without spanning it. Residues 932–945 (GYPGVDCSLSGEFN) are Extracellular-facing. Residues 946–968 (VISKLVIIAMMIRGRHRGLPYTI) traverse the membrane as a helical segment. The Cytoplasmic segment spans residues 969–1059 (DRAIMLPNAA…RYVVRTVSEV (91 aa)).

It belongs to the TrkH potassium transport family.

It localises to the cell membrane. It carries out the reaction K(+)(in) = K(+)(out). It catalyses the reaction chloride(in) = chloride(out). TRK1-mediated chloride conductance is blocked by 4,4'-diisothiocyanatostilbene-2,2'-disulfonic acid. In terms of biological role, potassium transporter that mediates K(+) influx, as well as Cl(-) efflux as a secondary function. TRK1 is the major K(+) uptake transporter that regulates membrane potential and intracellular pH. The TRK1-mediated Cl(-) efflux should serve as a Cl(-) detoxification route and may play a role in sustaining C.albicans on mammalian epithelial surfaces, or in physiological saline solutions such as saliva. Mediates candidacidal activities of cysteine-free peptides, but not of defensins. The hallmark of salivary gland-secreted histatin-5 (Hst 5) killing of C.albicans is the rapid efflux of cellular ATP and other small nucleotides and ions from the cell as well as concurrent intracellular uptake of propidium iodide (PI). TRK1 is the channel for Hst 5-induced killing and histatin-5 may directly or indirectly alter TRK1 function, allowing the efflux of larger anions, including ATP, and the influx of small cationic dyes, such as PI. In Candida albicans (Yeast), this protein is Potassium transporter TRK1.